A 1377-amino-acid polypeptide reads, in one-letter code: DNA-directed RNA polymerase subunit beta' (1377 aa).

Cys-60, Cys-62, Cys-75, and Cys-78 together coordinate Zn(2+). Residues Asp-449, Asp-451, and Asp-453 each coordinate Mg(2+). 4 residues coordinate Zn(2+): Cys-777, Cys-851, Cys-858, and Cys-861.

The protein belongs to the RNA polymerase beta' chain family. In terms of assembly, the RNAP catalytic core consists of 2 alpha, 1 beta, 1 beta' and 1 omega subunit. When a sigma factor is associated with the core the holoenzyme is formed, which can initiate transcription. Mg(2+) serves as cofactor. The cofactor is Zn(2+).

It carries out the reaction RNA(n) + a ribonucleoside 5'-triphosphate = RNA(n+1) + diphosphate. DNA-dependent RNA polymerase catalyzes the transcription of DNA into RNA using the four ribonucleoside triphosphates as substrates. This is DNA-directed RNA polymerase subunit beta' from Borrelia turicatae (strain 91E135).